A 219-amino-acid polypeptide reads, in one-letter code: Protein RhiB (219 aa).

The segment covering 174–195 (AGISQQGNAAGTSISSKSTGSP) has biased composition (polar residues). The interval 174-201 (AGISQQGNAAGTSISSKSTGSPENPART) is disordered.

In terms of biological role, may be involved in plant-microbe interaction. The polypeptide is Protein RhiB (rhiB) (Rhizobium leguminosarum bv. viciae).